The sequence spans 420 residues: UDP-N-acetylglucosamine 1-carboxyvinyltransferase (420 aa).

22-23 (KN) is a binding site for phosphoenolpyruvate. A UDP-N-acetyl-alpha-D-glucosamine-binding site is contributed by Arg93. Cys117 (proton donor) is an active-site residue. Position 117 is a 2-(S-cysteinyl)pyruvic acid O-phosphothioketal (Cys117). 2 residues coordinate UDP-N-acetyl-alpha-D-glucosamine: Asp307 and Ile329.

The protein belongs to the EPSP synthase family. MurA subfamily.

It localises to the cytoplasm. It catalyses the reaction phosphoenolpyruvate + UDP-N-acetyl-alpha-D-glucosamine = UDP-N-acetyl-3-O-(1-carboxyvinyl)-alpha-D-glucosamine + phosphate. The protein operates within cell wall biogenesis; peptidoglycan biosynthesis. Functionally, cell wall formation. Adds enolpyruvyl to UDP-N-acetylglucosamine. In Alcanivorax borkumensis (strain ATCC 700651 / DSM 11573 / NCIMB 13689 / SK2), this protein is UDP-N-acetylglucosamine 1-carboxyvinyltransferase.